A 518-amino-acid polypeptide reads, in one-letter code: Sugar transport protein MST3 (518 aa).

The Cytoplasmic segment spans residues 1–18; the sequence is MAGGAVVSTGAGKDYPGK. The helical transmembrane segment at 19–39 threads the bilayer; that stretch reads LTLFVFFTCVVAATGGLIFGY. Over 40-80 the chain is Extracellular; it reads DIGISGGVTSMDPFLRKFFPEVYRKKQMADKNNQYCKYDNQ. A helical membrane pass occupies residues 81–101; sequence LLQTFTSSLYLAALVSSFFAA. At 102–117 the chain is on the cytoplasmic side; it reads TVTRVLGRKWSMFAGG. Residues 118–138 traverse the membrane as a helical segment; it reads LTFLIGAALNGAAENVAMLIV. The Extracellular portion of the chain corresponds to 139–140; it reads GR. A helical membrane pass occupies residues 141-161; that stretch reads ILLGVGVGFANQSVPVYLSEM. Topologically, residues 162–167 are cytoplasmic; sequence APARLR. Residues 168-188 form a helical membrane-spanning segment; that stretch reads GMLNIGFQLMITIGILAAELI. Residues 189-202 lie on the Extracellular side of the membrane; sequence NYGTAKIKAGWGWR. Residues 203–223 form a helical membrane-spanning segment; sequence VSLALAAVPAAIITLGSLFLP. The Cytoplasmic portion of the chain corresponds to 224–290; that stretch reads DTPNSLIDRG…YRAQLTMAIC (67 aa). The helical transmembrane segment at 291 to 311 threads the bilayer; that stretch reads IPFFQQLTGINVIMFYAPVLF. Topologically, residues 312–322 are extracellular; the sequence is DTLGFKSDASL. Residues 323-343 form a helical membrane-spanning segment; that stretch reads MSAVITGLVNVFATLVSIFTV. At 344-351 the chain is on the cytoplasmic side; the sequence is DRLGRRKL. A helical membrane pass occupies residues 352-372; sequence FLQGGAQMVVCQVVVGTLIAV. Residues 373–387 lie on the Extracellular side of the membrane; that stretch reads KFGTSGIGDIPKGYA. Residues 388-408 form a helical membrane-spanning segment; it reads AVVVLFICMYVAGFAWSWGPL. Over 409-427 the chain is Cytoplasmic; that stretch reads GWLVPSEIFPLEIRPAGQS. Residues 428 to 448 traverse the membrane as a helical segment; it reads INVSVNMLFTFVIAQAFLTML. The Extracellular portion of the chain corresponds to 449 to 452; that stretch reads CHMK. Residues 453 to 473 form a helical membrane-spanning segment; sequence FGLFYFFAGWVVIMTVFIALF. Over 474–518 the chain is Cytoplasmic; it reads LPETKNVPIEEMVLVWKSHWFWRRFIGDHDVHVGANHVSNNKLQP.

This sequence belongs to the major facilitator superfamily. Sugar transporter (TC 2.A.1.1) family. In terms of tissue distribution, highly expressed in roots. Expressed in xylem and sclerenchyma cells of roots. Expressed at low levels in leaves.

Its subcellular location is the membrane. Mediates active uptake of hexoses by sugar:proton symport. Can transport glucose, xylose and 3-O-methylglucose. May be involved in the accumulation of monosaccharides required for cell wall synthesis during root development. This chain is Sugar transport protein MST3, found in Oryza sativa subsp. japonica (Rice).